The sequence spans 84 residues: Small ribosomal subunit protein uS17 (84 aa).

The protein belongs to the universal ribosomal protein uS17 family. Part of the 30S ribosomal subunit.

Its function is as follows. One of the primary rRNA binding proteins, it binds specifically to the 5'-end of 16S ribosomal RNA. This is Small ribosomal subunit protein uS17 from Citrobacter koseri (strain ATCC BAA-895 / CDC 4225-83 / SGSC4696).